The primary structure comprises 85 residues: Putative membrane protein insertion efficiency factor (85 aa).

This sequence belongs to the UPF0161 family.

Its subcellular location is the cell inner membrane. In terms of biological role, could be involved in insertion of integral membrane proteins into the membrane. In Phenylobacterium zucineum (strain HLK1), this protein is Putative membrane protein insertion efficiency factor.